Consider the following 258-residue polypeptide: UPF0246 protein CGSHiGG_08495 (258 aa).

It belongs to the UPF0246 family.

This chain is UPF0246 protein CGSHiGG_08495, found in Haemophilus influenzae (strain PittGG).